We begin with the raw amino-acid sequence, 444 residues long: Tubulin gamma chain (444 aa).

144–150 (SGGTGSG) contacts GTP.

It belongs to the tubulin family.

The protein resides in the cytoplasm. The protein localises to the cytoskeleton. It localises to the microtubule organizing center. Its subcellular location is the centrosome. It is found in the cell junction. The protein resides in the hemidesmosome. The protein localises to the adherens junction. In terms of biological role, tubulin is the major constituent of microtubules. The gamma chain is found at microtubule organizing centers (MTOC) such as the spindle poles or the centrosome, suggesting that it is involved in the minus-end nucleation of microtubule assembly. The polypeptide is Tubulin gamma chain (tbg-1) (Caenorhabditis elegans).